Here is a 318-residue protein sequence, read N- to C-terminus: 1-aminocyclopropane-1-carboxylate oxidase 1 (318 aa).

Positions 153 to 254 constitute a Fe2OG dioxygenase domain; that stretch reads PTFGTKVSNY…RMSIASFYNP (102 aa). Residues histidine 177, aspartate 179, and histidine 234 each contribute to the Fe cation site.

Belongs to the iron/ascorbate-dependent oxidoreductase family. Requires Fe cation as cofactor. In terms of tissue distribution, fruit.

The enzyme catalyses 1-aminocyclopropane-1-carboxylate + L-ascorbate + O2 = ethene + L-dehydroascorbate + hydrogen cyanide + CO2 + 2 H2O. Its pathway is alkene biosynthesis; ethylene biosynthesis via S-adenosyl-L-methionine; ethylene from S-adenosyl-L-methionine: step 2/2. In Cucumis melo (Muskmelon), this protein is 1-aminocyclopropane-1-carboxylate oxidase 1 (ACO1).